The chain runs to 1064 residues: Serine/threonine protein kinase KIN1 (1064 aa).

Residues M1 to H113 are disordered. The segment covering T8–A36 has biased composition (polar residues). The span at A74–A91 shows a compositional bias: basic and acidic residues. The segment covering K93 to M108 has biased composition (polar residues). Residues W120–M398 form the Protein kinase domain. ATP is bound by residues V126–V134 and K149. D269 functions as the Proton acceptor in the catalytic mechanism. S534 carries the post-translational modification Phosphoserine. A disordered region spans residues S549–Q621. Polar residues predominate over residues T557–G571. The residue at position 593 (S593) is a Phosphoserine. The segment covering K598–E608 has biased composition (basic and acidic residues). A Phosphoserine modification is found at S646. Disordered stretches follow at residues T652 to H672, M694 to L714, E762 to R797, L823 to D843, and H958 to T1016. The span at E654–K670 shows a compositional bias: polar residues. S764 is modified (phosphoserine). Residues K779–H794 are compositionally biased toward basic residues. Composition is skewed to polar residues over residues D832–D843, R963–E989, and G998–T1016. S986 carries the phosphoserine modification. Residues T1015–L1064 enclose the KA1 domain.

Belongs to the protein kinase superfamily. CAMK Ser/Thr protein kinase family. NIM1 subfamily. In terms of assembly, interacts with SEC9 and SRO7. Post-translationally, autophosphorylated.

Its subcellular location is the cytoplasm. The protein localises to the cell membrane. The catalysed reaction is L-seryl-[protein] + ATP = O-phospho-L-seryl-[protein] + ADP + H(+). It catalyses the reaction L-threonyl-[protein] + ATP = O-phospho-L-threonyl-[protein] + ADP + H(+). Functionally, serine/threonine protein kinase involved in the regulation of exocytosis. Induces phosphorylation of SEC9 and its release from the plasma membrane to the cytosol. The chain is Serine/threonine protein kinase KIN1 (KIN1) from Saccharomyces cerevisiae (strain ATCC 204508 / S288c) (Baker's yeast).